Reading from the N-terminus, the 842-residue chain is Glucans biosynthesis glucosyltransferase H (842 aa).

The next 7 helical transmembrane spans lie at 140–160 (ILLL…KTIL), 194–214 (ILIL…TALM), 513–533 (VFLT…FLAL), 568–588 (IALF…SIIL), 615–635 (VLLA…AFLG), 656–676 (FMRH…MAWL), and 680–700 (FLFW…VSAI).

Belongs to the glycosyltransferase 2 family. OpgH subfamily.

The protein localises to the cell inner membrane. Its pathway is glycan metabolism; osmoregulated periplasmic glucan (OPG) biosynthesis. Functionally, involved in the biosynthesis of osmoregulated periplasmic glucans (OPGs). This Klebsiella pneumoniae subsp. pneumoniae (strain ATCC 700721 / MGH 78578) protein is Glucans biosynthesis glucosyltransferase H.